Reading from the N-terminus, the 239-residue chain is Fatty acid metabolism regulator protein (239 aa).

The region spanning glutamine 6–phenylalanine 74 is the HTH gntR-type domain. A DNA-binding region (H-T-H motif) is located at residues glutamate 34–glutamine 53.

In terms of assembly, homodimer.

Its subcellular location is the cytoplasm. Functionally, multifunctional regulator of fatty acid metabolism. This chain is Fatty acid metabolism regulator protein, found in Salmonella paratyphi C (strain RKS4594).